Here is a 131-residue protein sequence, read N- to C-terminus: Maturin (131 aa).

Tyr34 carries the phosphotyrosine modification. Residues 107–120 show a composition bias toward acidic residues; the sequence is FEEYSADVEEEEPE. The disordered stretch occupies residues 107-131; the sequence is FEEYSADVEEEEPEADHPQMGVSQQ.

The protein belongs to the MTURN family. Post-translationally, phosphorylation at Tyr-34 is essential for its ability to promote megakaryocyte differentiation. Expressed in the thymus, bone marrow and spleen.

It is found in the cytoplasm. Its function is as follows. Promotes megakaryocyte differentiation by enhancing ERK and JNK signaling as well as up-regulating RUNX1 and FLI1 expression. Represses NF-kappa-B transcriptional activity by inhibiting phosphorylation of RELA at 'Ser- 536'. May be involved in early neuronal development. This is Maturin (Mturn) from Mus musculus (Mouse).